A 331-amino-acid chain; its full sequence is Glyceraldehyde-3-phosphate dehydrogenase (331 aa).

NAD(+) contacts are provided by residues 12 to 13, Asp34, Arg78, and Thr120; that span reads RI. Residues 149-151, Thr180, 209-210, and Arg232 contribute to the D-glyceraldehyde 3-phosphate site; these read SCT and TG. Catalysis depends on Cys150, which acts as the Nucleophile. Asn314 provides a ligand contact to NAD(+).

Belongs to the glyceraldehyde-3-phosphate dehydrogenase family. Homotetramer.

The protein resides in the cytoplasm. The enzyme catalyses D-glyceraldehyde 3-phosphate + phosphate + NAD(+) = (2R)-3-phospho-glyceroyl phosphate + NADH + H(+). It participates in carbohydrate degradation; glycolysis; pyruvate from D-glyceraldehyde 3-phosphate: step 1/5. Functionally, catalyzes the oxidative phosphorylation of glyceraldehyde 3-phosphate (G3P) to 1,3-bisphosphoglycerate (BPG) using the cofactor NAD. The first reaction step involves the formation of a hemiacetal intermediate between G3P and a cysteine residue, and this hemiacetal intermediate is then oxidized to a thioester, with concomitant reduction of NAD to NADH. The reduced NADH is then exchanged with the second NAD, and the thioester is attacked by a nucleophilic inorganic phosphate to produce BPG. This Salmonella typhi protein is Glyceraldehyde-3-phosphate dehydrogenase (gapA).